We begin with the raw amino-acid sequence, 506 residues long: 2-isopropylmalate synthase (506 aa).

The Pyruvate carboxyltransferase domain occupies 4–266 (ILFMDTTLRD…EPSMTLKEIK (263 aa)). Residues D13, H201, H203, and N237 each coordinate Mn(2+). The interval 390-506 (NITQLQVHFV…KLKSFIQLVK (117 aa)) is regulatory domain.

This sequence belongs to the alpha-IPM synthase/homocitrate synthase family. LeuA type 1 subfamily. Homodimer. It depends on Mn(2+) as a cofactor.

It localises to the cytoplasm. It carries out the reaction 3-methyl-2-oxobutanoate + acetyl-CoA + H2O = (2S)-2-isopropylmalate + CoA + H(+). Its pathway is amino-acid biosynthesis; L-leucine biosynthesis; L-leucine from 3-methyl-2-oxobutanoate: step 1/4. Functionally, catalyzes the condensation of the acetyl group of acetyl-CoA with 3-methyl-2-oxobutanoate (2-ketoisovalerate) to form 3-carboxy-3-hydroxy-4-methylpentanoate (2-isopropylmalate). The chain is 2-isopropylmalate synthase from Bacillus cereus (strain ZK / E33L).